The primary structure comprises 482 residues: Catalase (482 aa).

A compositionally biased stretch (polar residues) spans methionine 1 to serine 23. Positions methionine 1–glycine 28 are disordered. Active-site residues include histidine 55 and asparagine 128. Tyrosine 338 lines the heme pocket. Residues serine 370–alanine 395 form a disordered region.

This sequence belongs to the catalase family. Heme is required as a cofactor.

The enzyme catalyses 2 H2O2 = O2 + 2 H2O. Functionally, decomposes hydrogen peroxide into water and oxygen; serves to protect cells from the toxic effects of hydrogen peroxide. The polypeptide is Catalase (cat) (Onchocerca volvulus endobacterium).